Here is a 210-residue protein sequence, read N- to C-terminus: Thymidylate kinase (210 aa).

10-17 (GIDGCGKT) lines the ATP pocket.

The protein belongs to the thymidylate kinase family.

It carries out the reaction dTMP + ATP = dTDP + ADP. Functionally, phosphorylation of dTMP to form dTDP in both de novo and salvage pathways of dTTP synthesis. This is Thymidylate kinase from Prochlorococcus marinus (strain MIT 9515).